We begin with the raw amino-acid sequence, 306 residues long: Lymphotoxin-beta (306 aa).

The Cytoplasmic portion of the chain corresponds to 1–27; it reads MGTRGLQGLGGRPQGRGCLLLAVAGAT. Residues 28–48 form a helical; Signal-anchor for type II membrane protein membrane-spanning segment; it reads SLVTLLLAVPITVLAVLALVP. Over 49-306 the chain is Extracellular; that stretch reads QDQGRRVEKI…KTFFGAVMVG (258 aa). Disordered stretches follow at residues 63-112 and 127-151; these read AQAQ…GPVA and PAAD…DLNP. A compositionally biased stretch (low complexity) spans 74 to 85; the sequence is PSCILPSPSSLS. A compositionally biased stretch (polar residues) spans 95–112; that stretch reads QRSNASRNLASTSQGPVA. Asn98 carries N-linked (GlcNAc...) asparagine glycosylation. The THD domain maps to 154-305; the sequence is PAAHLIGAWM…GKTFFGAVMV (152 aa). Asn284 carries an N-linked (GlcNAc...) asparagine glycan.

Belongs to the tumor necrosis factor family. As to quaternary structure, heterotrimer of either two LTB and one LTA subunits or (less prevalent) two LTA and one LTB subunits.

It is found in the membrane. Functionally, cytokine that binds to LTBR/TNFRSF3. May play a specific role in immune response regulation. Provides the membrane anchor for the attachment of the heterotrimeric complex to the cell surface. This Mus musculus (Mouse) protein is Lymphotoxin-beta (Ltb).